The primary structure comprises 211 residues: Uridine kinase (211 aa).

12 to 19 (GGSGSGKT) is a binding site for ATP.

This sequence belongs to the uridine kinase family.

It is found in the cytoplasm. It carries out the reaction uridine + ATP = UMP + ADP + H(+). The catalysed reaction is cytidine + ATP = CMP + ADP + H(+). Its pathway is pyrimidine metabolism; CTP biosynthesis via salvage pathway; CTP from cytidine: step 1/3. It participates in pyrimidine metabolism; UMP biosynthesis via salvage pathway; UMP from uridine: step 1/1. This Anoxybacillus flavithermus (strain DSM 21510 / WK1) protein is Uridine kinase.